We begin with the raw amino-acid sequence, 173 residues long: MGASSSSSVSEKSIHQFTVKDSSGKEVDLSVYQGKVLLVVNVASKCGFTESNYTQLTELYRKYKDQGFVVLAFPCNQFLSQEPGTSEEAHQFACTRFKAEYPVFQKVRVNGQNAAPVYKFLKSKKPSFLGSRIKWNFTKFLVGKDGQVIDRYGTTVSPLSIQKDIEKALAQEL.

G2 carries N-myristoyl glycine lipidation. The active site involves C46.

It belongs to the glutathione peroxidase family. Ubiquitous.

The protein localises to the cell membrane. It carries out the reaction 2 glutathione + H2O2 = glutathione disulfide + 2 H2O. May constitute a glutathione peroxidase-like protective system against oxidative stresses. The polypeptide is Probable glutathione peroxidase 5 (GPX5) (Arabidopsis thaliana (Mouse-ear cress)).